A 419-amino-acid polypeptide reads, in one-letter code: L-rhamnose isomerase (419 aa).

Mn(2+) contacts are provided by H262, D294, and D296.

The protein belongs to the rhamnose isomerase family. Homotetramer. The cofactor is Mn(2+).

Its subcellular location is the cytoplasm. The enzyme catalyses L-rhamnopyranose = L-rhamnulose. It functions in the pathway carbohydrate degradation; L-rhamnose degradation; glycerone phosphate from L-rhamnose: step 1/3. Catalyzes the interconversion of L-rhamnose and L-rhamnulose. The polypeptide is L-rhamnose isomerase (Salmonella choleraesuis (strain SC-B67)).